The sequence spans 269 residues: Putative ABC transporter ATP-binding protein PF0528 (269 aa).

Residues 6-237 enclose the ABC transporter domain; sequence IVVENLYSSY…EILKRNNLDV (232 aa). 39–46 contacts ATP; sequence GPNGAGKS.

This sequence belongs to the ABC transporter superfamily.

It is found in the cell membrane. Its function is as follows. Probably part of an ABC transporter complex. Responsible for energy coupling to the transport system. The protein is Putative ABC transporter ATP-binding protein PF0528 of Pyrococcus furiosus (strain ATCC 43587 / DSM 3638 / JCM 8422 / Vc1).